The chain runs to 117 residues: Large ribosomal subunit protein bL20 (117 aa).

Belongs to the bacterial ribosomal protein bL20 family.

Binds directly to 23S ribosomal RNA and is necessary for the in vitro assembly process of the 50S ribosomal subunit. It is not involved in the protein synthesizing functions of that subunit. The chain is Large ribosomal subunit protein bL20 from Mesomycoplasma hyopneumoniae (strain J / ATCC 25934 / NCTC 10110) (Mycoplasma hyopneumoniae).